The sequence spans 438 residues: Dihydroorotase (438 aa).

The Zn(2+) site is built by His-58 and His-60. Substrate contacts are provided by residues 60 to 62 (HLR) and Asn-92. Asp-152, His-179, and His-232 together coordinate Zn(2+). Asn-278 contacts substrate. Asp-305 contributes to the Zn(2+) binding site. The active site involves Asp-305. Residues His-309 and 323 to 324 (FG) contribute to the substrate site.

It belongs to the metallo-dependent hydrolases superfamily. DHOase family. Class I DHOase subfamily. Zn(2+) is required as a cofactor.

The catalysed reaction is (S)-dihydroorotate + H2O = N-carbamoyl-L-aspartate + H(+). It functions in the pathway pyrimidine metabolism; UMP biosynthesis via de novo pathway; (S)-dihydroorotate from bicarbonate: step 3/3. Catalyzes the reversible cyclization of carbamoyl aspartate to dihydroorotate. This is Dihydroorotase from Leifsonia xyli subsp. xyli (strain CTCB07).